A 347-amino-acid chain; its full sequence is Anthranilate phosphoribosyltransferase (347 aa).

Residues glycine 86, glycine 89–aspartate 90, threonine 94, asparagine 96–threonine 99, lysine 114–serine 122, and serine 126 each bind 5-phospho-alpha-D-ribose 1-diphosphate. Glycine 86 provides a ligand contact to anthranilate. Position 98 (serine 98) interacts with Mg(2+). Asparagine 117 is an anthranilate binding site. Arginine 172 serves as a coordination point for anthranilate. The Mg(2+) site is built by aspartate 230 and glutamate 231.

The protein belongs to the anthranilate phosphoribosyltransferase family. Homodimer. Mg(2+) is required as a cofactor.

It carries out the reaction N-(5-phospho-beta-D-ribosyl)anthranilate + diphosphate = 5-phospho-alpha-D-ribose 1-diphosphate + anthranilate. It participates in amino-acid biosynthesis; L-tryptophan biosynthesis; L-tryptophan from chorismate: step 2/5. Its function is as follows. Catalyzes the transfer of the phosphoribosyl group of 5-phosphorylribose-1-pyrophosphate (PRPP) to anthranilate to yield N-(5'-phosphoribosyl)-anthranilate (PRA). The chain is Anthranilate phosphoribosyltransferase from Shewanella frigidimarina (strain NCIMB 400).